Here is a 332-residue protein sequence, read N- to C-terminus: Eukaryotic translation initiation factor 3 subunit H (332 aa).

The MPN domain maps to 18–153 (VQVDGLTVLK…LKAFRLSDEM (136 aa)). The disordered stretch occupies residues 251 to 285 (QQQKENYLQRRQQENQSRIQRGEDPLPDEDLSKMF).

The protein belongs to the eIF-3 subunit H family. As to quaternary structure, component of the eukaryotic translation initiation factor 3 (eIF-3) complex.

The protein localises to the cytoplasm. Its function is as follows. Component of the eukaryotic translation initiation factor 3 (eIF-3) complex, which is involved in protein synthesis of a specialized repertoire of mRNAs and, together with other initiation factors, stimulates binding of mRNA and methionyl-tRNAi to the 40S ribosome. The eIF-3 complex specifically targets and initiates translation of a subset of mRNAs involved in cell proliferation. The protein is Eukaryotic translation initiation factor 3 subunit H of Nematostella vectensis (Starlet sea anemone).